A 188-amino-acid chain; its full sequence is Peptidyl-tRNA hydrolase (188 aa).

Tyr-15 contacts tRNA. The active-site Proton acceptor is His-20. Residues Phe-66, Asn-68, and Asn-114 each contribute to the tRNA site.

The protein belongs to the PTH family. As to quaternary structure, monomer.

The protein localises to the cytoplasm. It catalyses the reaction an N-acyl-L-alpha-aminoacyl-tRNA + H2O = an N-acyl-L-amino acid + a tRNA + H(+). Functionally, hydrolyzes ribosome-free peptidyl-tRNAs (with 1 or more amino acids incorporated), which drop off the ribosome during protein synthesis, or as a result of ribosome stalling. Catalyzes the release of premature peptidyl moieties from peptidyl-tRNA molecules trapped in stalled 50S ribosomal subunits, and thus maintains levels of free tRNAs and 50S ribosomes. This Lactococcus lactis subsp. cremoris (strain MG1363) protein is Peptidyl-tRNA hydrolase.